A 461-amino-acid chain; its full sequence is O-methyltransferase CTB2 (461 aa).

Asp-288 contacts S-adenosyl-L-methionine. Residue His-339 is the Proton acceptor of the active site.

It belongs to the class I-like SAM-binding methyltransferase superfamily. Cation-independent O-methyltransferase family. COMT subfamily.

Its pathway is mycotoxin biosynthesis. Functionally, O-methyltransferase; part of the gene cluster that mediates the biosynthesis of cercosporin, a light-activated, non-host-selective toxin. The perylenequinone chromophore of cercosporin absorbs light energy to attain an electronically-activated triplet state and produces active oxygen species such as the hydroxyl radical, superoxide, hydrogen peroxide or singlet oxygen upon reaction with oxygen molecules. These reactive oxygen species cause damage to various cellular components including lipids, proteins and nucleic acids. The first step of cercosporin biosynthesis is performed by the polyketide synthase CTB1 which catalyzes the formation of nor-toralactone. The starter unit acyltransferase (SAT) domain of CTB1 initiates polyketide extension by the selective utilization of acetyl-CoA, which is elongated to the heptaketide in the beta-ketoacyl synthase (KS) domain by successive condensations with six malonyl units introduced by the malonyl acyltransferase (MAT) domain. The product template (PT) domain catalyzes C4-C9 and C2-C11 aldol cyclizations and dehydrations to a trihydroxynaphthalene, which is thought to be delivered to the thioesterase (TE) domain for product release. The bifunctional enzyme CTB3 then methylates nor-toralactone to toralactone before conducting an unusual oxidative aromatic ring opening. The O-methyltransferase CTB2 further methylates the nascent OH-6 of the CBT3 product, blocking further oxidation at this site before the reductase CTB6 reduces the 2-oxopropyl ketone at position C7, giving naphthalene. The FAD-dependent monooxygenase CTB5 in concert with the multicopper oxidase CTB12 are responsible for homodimerization of naphthalene with CTB7 installing the dioxepine moiety, finally producing cercosporin. The fasciclin domain-containing protein CTB11 might act with CTB5 and CTB12 whereas the roles of CTB9 and CTB10 have still to be elucidated. The polypeptide is O-methyltransferase CTB2 (Cercospora nicotianae (Barn spot disease fungus)).